The chain runs to 257 residues: Ribonuclease HII (257 aa).

Positions 72 to 257 (TYIAGIDEVG…FAPIKDMIQK (186 aa)) constitute an RNase H type-2 domain. D78, E79, and D170 together coordinate a divalent metal cation.

This sequence belongs to the RNase HII family. The cofactor is Mn(2+). Mg(2+) serves as cofactor.

It localises to the cytoplasm. It catalyses the reaction Endonucleolytic cleavage to 5'-phosphomonoester.. Functionally, endonuclease that specifically degrades the RNA of RNA-DNA hybrids. The polypeptide is Ribonuclease HII (Bacillus cereus (strain ATCC 10987 / NRS 248)).